We begin with the raw amino-acid sequence, 360 residues long: Galactoside alpha-(1,2)-fucosyltransferase 1 (360 aa).

Over 1 to 8 (MWAPGHHH) the chain is Cytoplasmic. Residues 9–27 (LCLIFLLTCVFACVFFLLI) form a helical; Signal-anchor for type II membrane protein membrane-spanning segment. Residues 28 to 360 (HQNLFHSGLD…GINADLSPLQ (333 aa)) lie on the Lumenal side of the membrane. Residues Asn65, Asn301, and Asn327 are each glycosylated (N-linked (GlcNAc...) asparagine).

Belongs to the glycosyltransferase 11 family. Expressed in brain, intestine and kidney.

The protein localises to the golgi apparatus. It localises to the golgi stack membrane. The enzyme catalyses a ganglioside GM1 + GDP-beta-L-fucose = a ganglioside Fuc-GM1 + GDP + H(+). It catalyses the reaction a beta-D-galactosyl-(1-&gt;4)-N-acetyl-beta-D-glucosaminyl derivative + GDP-beta-L-fucose = an alpha-L-Fuc-(1-&gt;2)-beta-D-Gal-(1-&gt;4)-beta-D-GlcNAc derivative + GDP + H(+). It carries out the reaction a ganglioside GA1 + GDP-beta-L-fucose = a ganglioside Fuc-GA1 + GDP + H(+). The catalysed reaction is a beta-D-Gal-(1-&gt;3)-beta-D-GlcNAc-(1-&gt;3)-beta-D-Gal-(1-&gt;4)-beta-D-Glc-(1&lt;-&gt;1')-Cer(d18:1(4E)) + GDP-beta-L-fucose = alpha-L-fucosyl-(1-&gt;2)- beta-D-galactosyl-(1-&gt;3)-N-acetyl-beta-D-glucosaminyl-(1-&gt;3)-beta-D-galactosyl-(1-&gt;4)-beta-D-glucosyl-(1&lt;-&gt;1')-N-acylsphing-4-enine + GDP + H(+). The enzyme catalyses a neolactoside nLc4Cer(d18:1(4E)) + GDP-beta-L-fucose = a neolactoside IV(2)-alpha-Fuc-nLc4Cer(d18:1(4E)) + GDP + H(+). It catalyses the reaction beta-D-galactosyl-(1-&gt;3)-N-acetyl-D-galactosamine + GDP-beta-L-fucose = alpha-L-fucosyl-(1-&gt;2)-beta-D-galactosyl-(1-&gt;3)-N-acetyl-D-galactosamine + GDP + H(+). It functions in the pathway protein modification; protein glycosylation. Catalyzes the transfer of L-fucose, from a guanosine diphosphate-beta-L-fucose, to the terminal galactose residue of glycoconjugates through an alpha(1,2) linkage leading to H antigen synthesis that is an intermediate substrate in the synthesis of ABO blood group antigens. H antigen is essential for maturation of the glomerular layer of the main olfactory bulb, in cell migration and early cell-cell contacts during tumor associated angiogenesis. Preferentially fucosylates soluble lactose and to a lesser extent, fucosylates glycolipids gangliosides GA1 and GM1a. This Bos taurus (Bovine) protein is Galactoside alpha-(1,2)-fucosyltransferase 1.